The following is a 1216-amino-acid chain: Apical endosomal glycoprotein (1216 aa).

The N-terminal stretch at 1 to 21 (MCLPSCLLSIWVLFMAAQSLG) is a signal peptide. The Extracellular segment spans residues 22–1155 (KTWVPDHCRS…SQGRVAAPVS (1134 aa)). The region spanning 27-54 (DHCRSPTEATCNFVCDCGDCSDEAQCGF) is the LDL-receptor class A 1; truncated domain. The region spanning 62–224 (NTPFTCNFEQ…DDMEFWDCGL (163 aa)) is the MAM 1 domain. Asn205 carries an N-linked (GlcNAc...) asparagine glycan. In terms of domain architecture, LDL-receptor class A 2 spans 229 to 269 (ARCPLGHHHCQNKACVEPHQLCDGEDNCGDSSDEDPLICSH). Disulfide bonds link Cys231-Cys243, Cys238-Cys256, and Cys250-Cys267. Positions 268-427 (SHHMATDFET…DLIMSNHCIL (160 aa)) constitute an MAM 2 domain. 3 N-linked (GlcNAc...) asparagine glycosylation sites follow: Asn291, Asn341, and Asn368. In terms of domain architecture, LDL-receptor class A 3 spans 454–491 (RTCDAGHLSCDELCVPPEQLCDFQQHCAEGEDEEKCGT). Intrachain disulfides connect Cys456/Cys467, Cys463/Cys480, and Cys474/Cys489. 4 consecutive MAM domains span residues 492–647 (TDFE…DCNP), 654–813 (DQEV…PCWA), 812–973 (WAAK…PCAQ), and 972–1142 (AQPG…HCKQ). The N-linked (GlcNAc...) asparagine glycan is linked to Asn639. An N-linked (GlcNAc...) asparagine glycan is attached at Asn839. A helical transmembrane segment spans residues 1156–1176 (VPVAVGGALLLFLLLLGLGGW). The Cytoplasmic portion of the chain corresponds to 1177–1216 (HWLQKQHLPCQSTDAAASGFDNILFNADQVTLPESITSNP).

Apical endosomal tubules of developing rat intestinal epithelial cells.

Its subcellular location is the membrane. Functionally, probably involved in the sorting and selective transport of receptors and ligands across polarized epithelia. This chain is Apical endosomal glycoprotein (Mamdc4), found in Rattus norvegicus (Rat).